A 246-amino-acid polypeptide reads, in one-letter code: Anionic trypsin-2 (246 aa).

Positions 1-15 are cleaved as a signal peptide; sequence MSALLILALVGAAVA. Positions 16–23 are cleaved as a propeptide — activation peptide; the sequence is FPVDDDDK. The region spanning 24 to 244 is the Peptidase S1 domain; the sequence is IVGGYTCRES…YVDWIQNTIA (221 aa). Intrachain disulfides connect Cys-30-Cys-160, Cys-48-Cys-64, Cys-132-Cys-233, Cys-139-Cys-206, Cys-171-Cys-185, and Cys-196-Cys-220. Residue His-63 is the Charge relay system of the active site. Residues Glu-75, Asn-77, Val-80, and Glu-85 each contribute to the Ca(2+) site. Catalysis depends on Asp-107, which acts as the Charge relay system. Ser-200 functions as the Charge relay system in the catalytic mechanism.

This sequence belongs to the peptidase S1 family. Ca(2+) is required as a cofactor. As to expression, expressed in the pancreas, lung and kidney.

It is found in the secreted. The protein resides in the extracellular space. It carries out the reaction Preferential cleavage: Arg-|-Xaa, Lys-|-Xaa.. The polypeptide is Anionic trypsin-2 (Prss2) (Mus musculus (Mouse)).